The following is a 217-amino-acid chain: Endo-1,4-beta-xylanase (217 aa).

Residues 1-17 (MQFLIPVVILCVSLVDS) form the signal peptide. The 198-residue stretch at 20–217 (VLYNNEIGFN…SSGFADITVS (198 aa)) folds into the GH11 domain. N56 and N80 each carry an N-linked (GlcNAc...) asparagine glycan. E107 functions as the Nucleophile in the catalytic mechanism. E204 functions as the Proton donor in the catalytic mechanism.

Belongs to the glycosyl hydrolase 11 (cellulase G) family. In terms of tissue distribution, expressed in larval carcasses and gut, and adult gut.

Its subcellular location is the secreted. The catalysed reaction is Endohydrolysis of (1-&gt;4)-beta-D-xylosidic linkages in xylans.. It participates in glycan degradation; xylan degradation. This Phaedon cochleariae (Mustard beetle) protein is Endo-1,4-beta-xylanase.